A 515-amino-acid polypeptide reads, in one-letter code: Nuclear hormone receptor family member nhr-62 (515 aa).

Positions 95-170 (NLVCVVCGDQ…AGMNPRAVQS (76 aa)) form a DNA-binding region, nuclear receptor. NR C4-type zinc fingers lie at residues 98 to 118 (CVVCGDQAFGKHYGVNACNGC) and 134 to 153 (CRFEGRCAIAKEHRNVCRAC). The tract at residues 169–195 (QSERVEREQNGSPNQIEEDDYKDLSSP) is disordered. Residues 225-509 (EMAKLSEQIV…YLCHEVQFIQ (285 aa)) form the NR LBD domain. The interval 498-509 (SEYLCHEVQFIQ) is AF-2.

This sequence belongs to the nuclear hormone receptor family. As to expression, widely expressed at a low level in many tissues including the pharynx, sensory neurons, intestine, spermatheca, hypodermis, and excretory cell.

The protein resides in the nucleus. Functionally, orphan nuclear hormone receptor. Required for metabolic and physiologic responses associated with dietary-restriction-induced longevity. Modulates triglyceride and lipid metabolism and autophagy, associated with dietary-restriction, probably acting via regulation of transcription of target genes. The polypeptide is Nuclear hormone receptor family member nhr-62 (nhr-62) (Caenorhabditis elegans).